Reading from the N-terminus, the 58-residue chain is UPF0337 protein SAV_738 (58 aa).

Residues 1–58 form a disordered region; sequence MAADEKAQANGEQAKGKVKKVVGGAAGNESLKGKGHAEESKGDLRAAKEKAKDAIKRK. A compositionally biased stretch (basic and acidic residues) spans 31–58; sequence LKGKGHAEESKGDLRAAKEKAKDAIKRK.

It belongs to the UPF0337 (CsbD) family.

The sequence is that of UPF0337 protein SAV_738 from Streptomyces avermitilis (strain ATCC 31267 / DSM 46492 / JCM 5070 / NBRC 14893 / NCIMB 12804 / NRRL 8165 / MA-4680).